The sequence spans 515 residues: Bifunctional purine biosynthesis protein PurH (515 aa).

The MGS-like domain maps to 1–145 (MTKRALISVS…KNHASVTVVV (145 aa)).

This sequence belongs to the PurH family.

It carries out the reaction (6R)-10-formyltetrahydrofolate + 5-amino-1-(5-phospho-beta-D-ribosyl)imidazole-4-carboxamide = 5-formamido-1-(5-phospho-D-ribosyl)imidazole-4-carboxamide + (6S)-5,6,7,8-tetrahydrofolate. The enzyme catalyses IMP + H2O = 5-formamido-1-(5-phospho-D-ribosyl)imidazole-4-carboxamide. It participates in purine metabolism; IMP biosynthesis via de novo pathway; 5-formamido-1-(5-phospho-D-ribosyl)imidazole-4-carboxamide from 5-amino-1-(5-phospho-D-ribosyl)imidazole-4-carboxamide (10-formyl THF route): step 1/1. The protein operates within purine metabolism; IMP biosynthesis via de novo pathway; IMP from 5-formamido-1-(5-phospho-D-ribosyl)imidazole-4-carboxamide: step 1/1. This is Bifunctional purine biosynthesis protein PurH from Streptococcus uberis (strain ATCC BAA-854 / 0140J).